The sequence spans 542 residues: Adenosylmethionine-8-amino-7-oxononanoate aminotransferase (542 aa).

Position 170-171 (170-171 (GS)) interacts with pyridoxal 5'-phosphate. Tyr205 is a substrate binding site. Asp311 is a binding site for pyridoxal 5'-phosphate. Positions 340, 375, and 470 each coordinate substrate. The residue at position 340 (Lys340) is an N6-(pyridoxal phosphate)lysine. Positions 509-542 (DGGLWTKRPDGPDNPDKANTPDTPDGARTGETVV) are disordered. Positions 515–524 (KRPDGPDNPD) are enriched in basic and acidic residues.

This sequence belongs to the class-III pyridoxal-phosphate-dependent aminotransferase family. BioA subfamily. As to quaternary structure, homodimer. The cofactor is pyridoxal 5'-phosphate.

The protein resides in the cytoplasm. The enzyme catalyses (8S)-8-amino-7-oxononanoate + S-adenosyl-L-methionine = S-adenosyl-4-methylsulfanyl-2-oxobutanoate + (7R,8S)-7,8-diammoniononanoate. It participates in cofactor biosynthesis; biotin biosynthesis; 7,8-diaminononanoate from 8-amino-7-oxononanoate (SAM route): step 1/1. In terms of biological role, catalyzes the transfer of the alpha-amino group from S-adenosyl-L-methionine (SAM) to 7-keto-8-aminopelargonic acid (KAPA) to form 7,8-diaminopelargonic acid (DAPA). It is the only aminotransferase known to utilize SAM as an amino donor. The polypeptide is Adenosylmethionine-8-amino-7-oxononanoate aminotransferase (Nitratidesulfovibrio vulgaris (strain ATCC 29579 / DSM 644 / CCUG 34227 / NCIMB 8303 / VKM B-1760 / Hildenborough) (Desulfovibrio vulgaris)).